The primary structure comprises 607 residues: Chaperone protein DnaK (607 aa).

The residue at position 174 (Thr174) is a Phosphothreonine; by autocatalysis. The segment covering 579-592 (AQAQAQQQAGANAG) has biased composition (low complexity). Residues 579–607 (AQAQAQQQAGANAGSDKKDEDVAEAEVVD) form a disordered region.

It belongs to the heat shock protein 70 family.

Acts as a chaperone. This chain is Chaperone protein DnaK, found in Fusobacterium nucleatum subsp. nucleatum (strain ATCC 25586 / DSM 15643 / BCRC 10681 / CIP 101130 / JCM 8532 / KCTC 2640 / LMG 13131 / VPI 4355).